Reading from the N-terminus, the 1208-residue chain is Chromosome partition protein Smc (1208 aa).

P32 to N39 lines the ATP pocket. Coiled-coil stretches lie at residues V170–I205, E239–Q504, and V694–D1054.

The protein belongs to the SMC family. In terms of assembly, homodimer.

The protein resides in the cytoplasm. Its function is as follows. Required for chromosome condensation and partitioning. In Thauera aminoaromatica, this protein is Chromosome partition protein Smc.